The following is a 298-amino-acid chain: Ribosomal protein L11 methyltransferase (298 aa).

Residues Thr-139, Gly-163, Asp-185, and Asn-232 each contribute to the S-adenosyl-L-methionine site.

The protein belongs to the methyltransferase superfamily. PrmA family.

Its subcellular location is the cytoplasm. The enzyme catalyses L-lysyl-[protein] + 3 S-adenosyl-L-methionine = N(6),N(6),N(6)-trimethyl-L-lysyl-[protein] + 3 S-adenosyl-L-homocysteine + 3 H(+). Methylates ribosomal protein L11. This Microcystis aeruginosa (strain NIES-843 / IAM M-2473) protein is Ribosomal protein L11 methyltransferase.